The primary structure comprises 81 residues: Sulfur carrier protein TusA (81 aa).

Residue Cys-19 is the Cysteine persulfide intermediate of the active site.

Belongs to the sulfur carrier protein TusA family.

It is found in the cytoplasm. Its function is as follows. Sulfur carrier protein which probably makes part of a sulfur-relay system. The chain is Sulfur carrier protein TusA from Shewanella denitrificans (strain OS217 / ATCC BAA-1090 / DSM 15013).